Reading from the N-terminus, the 394-residue chain is Tryptophan synthase beta chain (394 aa).

Lysine 90 is subject to N6-(pyridoxal phosphate)lysine.

The protein belongs to the TrpB family. As to quaternary structure, tetramer of two alpha and two beta chains. The cofactor is pyridoxal 5'-phosphate.

It catalyses the reaction (1S,2R)-1-C-(indol-3-yl)glycerol 3-phosphate + L-serine = D-glyceraldehyde 3-phosphate + L-tryptophan + H2O. Its pathway is amino-acid biosynthesis; L-tryptophan biosynthesis; L-tryptophan from chorismate: step 5/5. The beta subunit is responsible for the synthesis of L-tryptophan from indole and L-serine. The protein is Tryptophan synthase beta chain of Parabacteroides distasonis (strain ATCC 8503 / DSM 20701 / CIP 104284 / JCM 5825 / NCTC 11152).